Reading from the N-terminus, the 105-residue chain is UPF0235 protein Mchl_2407 (105 aa).

This sequence belongs to the UPF0235 family.

This is UPF0235 protein Mchl_2407 from Methylorubrum extorquens (strain CM4 / NCIMB 13688) (Methylobacterium extorquens).